The chain runs to 119 residues: Large ribosomal subunit protein bL20 (119 aa).

It belongs to the bacterial ribosomal protein bL20 family.

Its function is as follows. Binds directly to 23S ribosomal RNA and is necessary for the in vitro assembly process of the 50S ribosomal subunit. It is not involved in the protein synthesizing functions of that subunit. The sequence is that of Large ribosomal subunit protein bL20 from Geobacillus sp. (strain WCH70).